The primary structure comprises 363 residues: NADH-quinone oxidoreductase subunit H (363 aa).

The next 10 helical transmembrane spans lie at 29-49, 62-82, 96-116, 127-147, 163-183, 202-222, 238-257, 264-286, 299-319, and 339-359; these read VLKI…YVVW, GPMY…KLLF, FIIA…VVPF, VGLL…ILAG, AAQV…VMIA, FFDW…VSGV, EIVA…LFFL, ILVS…QGWV, KGGW…YIWF, and FIPL…YGVI.

It belongs to the complex I subunit 1 family. NDH-1 is composed of 14 different subunits. Subunits NuoA, H, J, K, L, M, N constitute the membrane sector of the complex.

It localises to the cell inner membrane. It catalyses the reaction a quinone + NADH + 5 H(+)(in) = a quinol + NAD(+) + 4 H(+)(out). Its function is as follows. NDH-1 shuttles electrons from NADH, via FMN and iron-sulfur (Fe-S) centers, to quinones in the respiratory chain. The immediate electron acceptor for the enzyme in this species is believed to be ubiquinone. Couples the redox reaction to proton translocation (for every two electrons transferred, four hydrogen ions are translocated across the cytoplasmic membrane), and thus conserves the redox energy in a proton gradient. This subunit may bind ubiquinone. This Xanthomonas oryzae pv. oryzae (strain PXO99A) protein is NADH-quinone oxidoreductase subunit H.